Reading from the N-terminus, the 479-residue chain is FK506-binding protein 4 (479 aa).

Disordered regions lie at residues 39-106, 141-162, and 205-367; these read IDPD…ARKL, VKGKAPATDDDDEDAESDEGLD, and GNYV…KTTG. 4 stretches are compositionally biased toward acidic residues: residues 40-49, 68-93, 148-162, and 214-256; these read DPDEAPEFDD, LDEEDSDDDYEDEDDSEDDSEDDEEV, TDDDDEDAESDEGLD, and PRDD…DLDG. 3 stretches are compositionally biased toward basic and acidic residues: residues 272-299, 325-334, and 348-364; these read APKLVDAKGKKKRGADEAALEAKDDKAK, AKPEQKETKK, and SKERKPDEKKPADKAEK. One can recognise a PPIase FKBP-type domain in the interval 393-479; it reads GNTVAMRYIG…IFDVKLLEIK (87 aa).

Belongs to the FKBP-type PPIase family. FKBP3/4 subfamily. In terms of assembly, binds to histones H3 and H4.

It is found in the nucleus. The enzyme catalyses [protein]-peptidylproline (omega=180) = [protein]-peptidylproline (omega=0). Inhibited by both FK506 and rapamycin. Functionally, PPIase that acts as a histone chaperone. Histone proline isomerase that increases the rate of cis-trans isomerization at prolines on the histone H3 N-terminal tail. Proline isomerization influences H3 methylation thereby regulating gene expression. The chain is FK506-binding protein 4 (fpr4) from Emericella nidulans (strain FGSC A4 / ATCC 38163 / CBS 112.46 / NRRL 194 / M139) (Aspergillus nidulans).